The sequence spans 88 residues: PTS system cellobiose-specific EIIB component (88 aa).

Residues 3 to 88 (KKRIYLFCSA…IDTLLYGKVD (86 aa)) enclose the PTS EIIB type-3 domain. Cys10 serves as the catalytic Phosphocysteine intermediate. At Cys10 the chain carries Phosphocysteine; by EIIA.

It localises to the cytoplasm. The enzyme catalyses D-cellobiose(out) + N(pros)-phospho-L-histidyl-[protein] = 6-phospho-beta-D-glucosyl-(1-&gt;4)-D-glucose(in) + L-histidyl-[protein]. The phosphoenolpyruvate-dependent sugar phosphotransferase system (sugar PTS), a major carbohydrate active transport system, catalyzes the phosphorylation of incoming sugar substrates concomitantly with their translocation across the cell membrane. The enzyme II CelABD PTS system is involved in cellobiose transport. This chain is PTS system cellobiose-specific EIIB component, found in Aeromonas hydrophila.